Here is a 164-residue protein sequence, read N- to C-terminus: Large ribosomal subunit protein uL10 (164 aa).

Belongs to the universal ribosomal protein uL10 family. Part of the ribosomal stalk of the 50S ribosomal subunit. The N-terminus interacts with L11 and the large rRNA to form the base of the stalk. The C-terminus forms an elongated spine to which L12 dimers bind in a sequential fashion forming a multimeric L10(L12)X complex.

In terms of biological role, forms part of the ribosomal stalk, playing a central role in the interaction of the ribosome with GTP-bound translation factors. The protein is Large ribosomal subunit protein uL10 of Chromobacterium violaceum (strain ATCC 12472 / DSM 30191 / JCM 1249 / CCUG 213 / NBRC 12614 / NCIMB 9131 / NCTC 9757 / MK).